The sequence spans 71 residues: Defensin 1 (71 aa).

The N-terminal stretch at 1–25 is a signal peptide; that stretch reads KTVAGFCIFFLVLFLAQEGVVKTEA. 3 disulfides stabilise this stretch: C28–C71, C39–C60, and C45–C65.

This sequence belongs to the DEFL family. In terms of assembly, may form dimers. Not glycosylated. Post-translationally, contains 4 disulfide bonds. In terms of processing, met-61 and Met-63 might be oxidized in some molecules.

Probably has antifungal activity. The protein is Defensin 1 of Arachis hypogaea (Peanut).